The primary structure comprises 350 residues: Galactokinase (350 aa).

A substrate-binding site is contributed by 15–18 (EHTD). ATP contacts are provided by residues S47 and 99-105 (GAGLSSS). Residues S105 and E137 each coordinate Mg(2+). Catalysis depends on D149, which acts as the Proton acceptor. Substrate is bound at residue Y198.

This sequence belongs to the GHMP kinase family. GalK subfamily.

Its subcellular location is the cytoplasm. It catalyses the reaction alpha-D-galactose + ATP = alpha-D-galactose 1-phosphate + ADP + H(+). It participates in carbohydrate metabolism; galactose metabolism. Catalyzes the transfer of the gamma-phosphate of ATP to D-galactose to form alpha-D-galactose-1-phosphate (Gal-1-P). This chain is Galactokinase, found in Pyrococcus horikoshii (strain ATCC 700860 / DSM 12428 / JCM 9974 / NBRC 100139 / OT-3).